A 129-amino-acid chain; its full sequence is MTRTDDPAARRRRATYLRGHGAERLALLALLLKGYRPLARRFAAAGGEIDLVMRRGSVIAFVEVKARPTLDAAAAAIDARKRRAFSRAARAWIARHPWSAGLTLRADAVFVAPRRWPRHLVSAFDLEPS.

It belongs to the UPF0102 family.

This is UPF0102 protein Mnod_0024 from Methylobacterium nodulans (strain LMG 21967 / CNCM I-2342 / ORS 2060).